A 285-amino-acid polypeptide reads, in one-letter code: Short chain dehydrogenase sol3 (285 aa).

3 residues coordinate NADP(+): L39, K64, and D87. Catalysis depends on proton donor residues S168 and Y200. NADP(+)-binding residues include Y200, K204, and S234. The active-site Lowers pKa of active site Tyr is the K204.

The protein belongs to the short-chain dehydrogenases/reductases (SDR) family.

Its pathway is phytotoxin biosynthesis. Short chain dehydrogenase; part of the gene cluster that mediates the biosynthesis of the phytotoxin solanapyrone, a causal agent of early blight disease of potato and tomato. The prosolanapyrone synthase sol1 is a polyketide synthase that produces the octaketide desmethylprosolanapyrone I via sequential condensations of 7 malonyl-CoA units with one acetyl-CoA unit, and one methylation step. The octaketide backbone is further methylated by the sol2 O-methyltransferase to yield prosolanapyrone I. Prosolanapyrone I is hydroxylated to prosolanapyrone II by the cytochrome P450 monooxygenase sol6. The solanapyrone synthase sol5 then catalyzes the oxidation of prosolanapyrone II and the subsequent Diels Alder cycloisomerization of the product prosolanapyrone III to solanapyrones A and D. Solanapyrones A and D are then converted into solanapyrones B and E, respectively, by the sol3 dehydrogenase. The protein is Short chain dehydrogenase sol3 (sol3) of Alternaria solani.